A 451-amino-acid polypeptide reads, in one-letter code: Bifunctional protein GlmU (451 aa).

The pyrophosphorylase stretch occupies residues 1–226; it reads MVAVAILAAG…YLEISGINDR (226 aa). Residues 7-10, lysine 21, glutamine 73, and 78-79 each bind UDP-N-acetyl-alpha-D-glucosamine; these read LAAG and GT. Aspartate 103 contributes to the Mg(2+) binding site. 4 residues coordinate UDP-N-acetyl-alpha-D-glucosamine: glycine 140, glutamate 155, asparagine 170, and asparagine 224. Residue asparagine 224 participates in Mg(2+) binding. The linker stretch occupies residues 227-247; the sequence is KQLATAYDILQNRIKDYWMRA. The tract at residues 248–451 is N-acetyltransferase; the sequence is GVTLIDPDSI…ISGWRMKTDD (204 aa). 2 residues coordinate UDP-N-acetyl-alpha-D-glucosamine: arginine 329 and lysine 347. Histidine 359 acts as the Proton acceptor in catalysis. Residues tyrosine 362 and asparagine 373 each contribute to the UDP-N-acetyl-alpha-D-glucosamine site. Residues alanine 376, 382–383, alanine 419, and arginine 436 each bind acetyl-CoA; that span reads NY.

In the N-terminal section; belongs to the N-acetylglucosamine-1-phosphate uridyltransferase family. This sequence in the C-terminal section; belongs to the transferase hexapeptide repeat family. Homotrimer. Mg(2+) serves as cofactor.

The protein localises to the cytoplasm. The catalysed reaction is alpha-D-glucosamine 1-phosphate + acetyl-CoA = N-acetyl-alpha-D-glucosamine 1-phosphate + CoA + H(+). It catalyses the reaction N-acetyl-alpha-D-glucosamine 1-phosphate + UTP + H(+) = UDP-N-acetyl-alpha-D-glucosamine + diphosphate. It participates in nucleotide-sugar biosynthesis; UDP-N-acetyl-alpha-D-glucosamine biosynthesis; N-acetyl-alpha-D-glucosamine 1-phosphate from alpha-D-glucosamine 6-phosphate (route II): step 2/2. The protein operates within nucleotide-sugar biosynthesis; UDP-N-acetyl-alpha-D-glucosamine biosynthesis; UDP-N-acetyl-alpha-D-glucosamine from N-acetyl-alpha-D-glucosamine 1-phosphate: step 1/1. It functions in the pathway bacterial outer membrane biogenesis; LPS lipid A biosynthesis. In terms of biological role, catalyzes the last two sequential reactions in the de novo biosynthetic pathway for UDP-N-acetylglucosamine (UDP-GlcNAc). The C-terminal domain catalyzes the transfer of acetyl group from acetyl coenzyme A to glucosamine-1-phosphate (GlcN-1-P) to produce N-acetylglucosamine-1-phosphate (GlcNAc-1-P), which is converted into UDP-GlcNAc by the transfer of uridine 5-monophosphate (from uridine 5-triphosphate), a reaction catalyzed by the N-terminal domain. The sequence is that of Bifunctional protein GlmU from Gloeothece citriformis (strain PCC 7424) (Cyanothece sp. (strain PCC 7424)).